The following is a 147-amino-acid chain: Transcription elongation factor Spt5 (147 aa).

Residues 91–122 (KGDVVEIIAGPFKGERAKVIRVDKHKEEVTLE) enclose the KOW domain.

It belongs to the archaeal Spt5 family. In terms of assembly, heterodimer composed of Spt4 and Spt5. Interacts with RNA polymerase (RNAP). Forms a homodimer in solution.

Functionally, stimulates transcription elongation. The sequence is that of Transcription elongation factor Spt5 from Methanocaldococcus jannaschii (strain ATCC 43067 / DSM 2661 / JAL-1 / JCM 10045 / NBRC 100440) (Methanococcus jannaschii).